We begin with the raw amino-acid sequence, 434 residues long: Trigger factor (434 aa).

The PPIase FKBP-type domain occupies G160–P245.

This sequence belongs to the FKBP-type PPIase family. Tig subfamily.

It is found in the cytoplasm. It carries out the reaction [protein]-peptidylproline (omega=180) = [protein]-peptidylproline (omega=0). Functionally, involved in protein export. Acts as a chaperone by maintaining the newly synthesized protein in an open conformation. Functions as a peptidyl-prolyl cis-trans isomerase. This is Trigger factor from Shewanella sp. (strain MR-4).